Here is a 496-residue protein sequence, read N- to C-terminus: Maturase K (496 aa).

This sequence belongs to the intron maturase 2 family. MatK subfamily.

Its subcellular location is the plastid. The protein localises to the chloroplast. Its function is as follows. Usually encoded in the trnK tRNA gene intron. Probably assists in splicing its own and other chloroplast group II introns. The sequence is that of Maturase K from Paeonia cambessedesii (Majorcan peony).